Here is a 143-residue protein sequence, read N- to C-terminus: Large-conductance mechanosensitive channel (143 aa).

2 helical membrane passes run 16-36 (VIDL…VTAL) and 84-104 (INTV…VKLI).

This sequence belongs to the MscL family. As to quaternary structure, homopentamer.

The protein resides in the cell inner membrane. Channel that opens in response to stretch forces in the membrane lipid bilayer. May participate in the regulation of osmotic pressure changes within the cell. This Xanthomonas axonopodis pv. citri (strain 306) protein is Large-conductance mechanosensitive channel.